The sequence spans 451 residues: Hexokinase (451 aa).

A Hexokinase domain is found at 6–445; the sequence is QQLFEKVVEI…SGKGAAAIAA (440 aa). The segment at 63–195 is hexokinase small subdomain; the sequence is NGTETGNFLA…ELNVKCVAVV (133 aa). 74-79 lines the ATP pocket; that stretch reads DLGGTN. Residues Ser144, 161–162, 196–197, 222–223, Glu249, and Glu283 contribute to the substrate site; these read TK, ND, and TN. Residues 196–434 form a hexokinase large subdomain region; the sequence is NDTVGTLASC…TRFCLRLSED (239 aa). Residues 288 to 289, 325 to 329, and 401 to 405 contribute to the ATP site; these read GM, TRYLT, and SLYKF.

This sequence belongs to the hexokinase family. Monomer.

It catalyses the reaction a D-hexose + ATP = a D-hexose 6-phosphate + ADP + H(+). The enzyme catalyses D-mannose + ATP = D-mannose 6-phosphate + ADP + H(+). The catalysed reaction is D-fructose + ATP = D-fructose 6-phosphate + ADP + H(+). It carries out the reaction D-glucose + ATP = D-glucose 6-phosphate + ADP + H(+). Its pathway is carbohydrate metabolism; hexose metabolism. It functions in the pathway carbohydrate degradation; glycolysis; D-glyceraldehyde 3-phosphate and glycerone phosphate from D-glucose: step 1/4. Its function is as follows. Catalyzes the phosphorylation of various hexoses to hexose 6-phosphate. This Schistosoma mansoni (Blood fluke) protein is Hexokinase.